The chain runs to 535 residues: MAASSLEQKLSRLEAKLKQENREARRRIDLNLDISPQRPRPIIVITLSPAPAPSQRAALQLPLANDGGSRSPSSESSPQHPTPPTRPRHMLGLPSTLFTPRSMESIEIDQKLQEIMKQTGYLTIGGQRYQAEINDLENLGEMGSGTCGQVWKMRFRKTGHIIAVKQMRRSGNKEENKRILMDLDVVLKSHDCPYIVQCFGTFITNTDVFIAMELMGTCAEKLKKRMQGPIPERILGKMTVAIVKALYYLKEKHGVIHRDVKPSNILLDERGQIKLCDFGISGRLVDSKAKTRSAGCAAYMAPERIDPPDPTKPDYDIRADVWSLGISLVELATGQFPYKNCKTDFEVLTKVLQEEPPLLPGHMGFSGDFQSFVKDCLTKDHRKRPKYNKLLEHSFIKHYEILEVDVASWFKDVMAKTESPRTSGVLSQHHLPFFSTSVTWGAWPLAAQTPFQSGVIRCRGRVPSPRRATGGSGGQPCVCAGGPGPSFTEMGPSPSPMLSNTFFTPDPGACPGASTWGLPRRRLCQLLTTSTPGCC.

Position 2 is an N-acetylalanine (alanine 2). Positions alanine 2–leucine 30 form a coiled coil. A d domain region spans residues glutamine 37–serine 73. A disordered region spans residues leucine 63–leucine 93. Over residues serine 69–glutamine 79 the composition is skewed to low complexity. Residues leucine 136–isoleucine 396 enclose the Protein kinase domain. ATP contacts are provided by residues methionine 142–valine 150 and lysine 165. The active-site Proton acceptor is the aspartate 259. At serine 287 the chain carries Phosphoserine; by MAP3K. At threonine 291 the chain carries Phosphothreonine; by MAP3K. Positions histidine 393–lysine 416 are DVD domain. Serine 427 carries the phosphoserine modification.

It belongs to the protein kinase superfamily. STE Ser/Thr protein kinase family. MAP kinase kinase subfamily. Interacts with RASSF7, the interaction promotes phosphorylation. Interacts with VRK2. Interacts (via its D domain) with its substrates MAPK8/JNK1, MAPK9/JNK2 and MAPK10/JNK3. Interacts (via its DVD domain) with MAP3Ks activators like MAP3K5/ASK1 and MAP3K1/MEKK1. Interacts with SH3RF1, MAPK8IP1/JIP1, MAPK8IP2/JIP2 and MAPK8IP3/JIP3 scaffold proteins. Found in a complex with SH3RF1, RAC1, MAP3K11/MLK3, MAPK8IP1/JIP1 and MAPK8/JNK1. Found in a complex with SH3RF1, RAC2, MAP3K7/TAK1, MAPK8IP1/JIP1, MAPK8/JNK1 and MAPK9/JNK2. The cofactor is Mg(2+). Post-translationally, activated by phosphorylation on Ser-287 and Thr-291 by MAP kinase kinase kinases (MAP3Ks). As to expression, expressed at high levels in brain, lung, liver, skeletal muscle, kidney, and testis and at lower levels in the heart and spleen.

It localises to the nucleus. It is found in the cytoplasm. The enzyme catalyses L-seryl-[protein] + ATP = O-phospho-L-seryl-[protein] + ADP + H(+). It carries out the reaction L-threonyl-[protein] + ATP = O-phospho-L-threonyl-[protein] + ADP + H(+). It catalyses the reaction L-tyrosyl-[protein] + ATP = O-phospho-L-tyrosyl-[protein] + ADP + H(+). Activated by phosphorylation by specific MAP kinase kinase kinases such as MAP3K1/MEKK1, MAP3K3/MEKK3, MAP3K11/MLK3 and MAP3K12/DLK. Isoforms 3 and 4 have lower basal activity but a higher level of inducible activation, than isoforms 2, 6, 7 and 8. Dual specificity protein kinase which acts as an essential component of the MAP kinase signal transduction pathway. Essential component of the stress-activated protein kinase/c-Jun N-terminal kinase (SAP/JNK) signaling pathway. With MAP2K4/MKK4, is the one of the only known kinase to directly activate the stress-activated protein kinase/c-Jun N-terminal kinases MAPK8/JNK1, MAPK9/JNK2 and MAPK10/JNK3. MAP2K4/MKK4 and MAP2K7/MKK7 both activate the JNKs by phosphorylation, but they differ in their preference for the phosphorylation site in the Thr-Pro-Tyr motif. MAP2K4/MKK4 shows preference for phosphorylation of the Tyr residue and MAP2K7/MKK7 for the Thr residue. The monophosphorylation of JNKs on the Thr residue is sufficient to increase JNK activity indicating that MAP2K7/MKK7 is important to trigger JNK activity, while the additional phosphorylation of the Tyr residue by MAP2K4/MKK4 ensures optimal JNK activation. Has a specific role in JNK signal transduction pathway activated by pro-inflammatory cytokines. The MKK/JNK signaling pathway is also involved in mitochondrial death signaling pathway, including the release cytochrome c, leading to apoptosis. Part of a non-canonical MAPK signaling pathway, composed of the upstream MAP3K12 kinase and downstream MAP kinases MAPK1/ERK2 and MAPK3/ERK1, that enhances the AP-1-mediated transcription of APP in response to APOE. The protein is Dual specificity mitogen-activated protein kinase kinase 7 of Mus musculus (Mouse).